The chain runs to 435 residues: UPF0597 protein ASA_0240 (435 aa).

It belongs to the UPF0597 family.

The sequence is that of UPF0597 protein ASA_0240 from Aeromonas salmonicida (strain A449).